Reading from the N-terminus, the 177-residue chain is Protein OPG036 (177 aa).

It belongs to the poxviridae OPG036 family.

It is found in the host nucleus. Functionally, plays a role in the inhibition of host innate immune response. Within the host nucleus, inhibits activation of interferon-beta promoter by inhibiting IRF3 activation. The polypeptide is Protein OPG036 (OPG036) (Homo sapiens (Human)).